A 432-amino-acid chain; its full sequence is Adenylosuccinate synthetase (432 aa).

Residues 13-19 (GDEGKGK) and 41-43 (GHT) each bind GTP. Residue D14 is the Proton acceptor of the active site. D14 and G41 together coordinate Mg(2+). IMP contacts are provided by residues 14–17 (DEGK), 39–42 (NAGH), T130, R144, Q225, T240, and R304. Catalysis depends on H42, which acts as the Proton donor. 300 to 306 (ATTGRRR) serves as a coordination point for substrate. GTP is bound by residues R306, 332–334 (KLD), and 415–417 (STG).

This sequence belongs to the adenylosuccinate synthetase family. Homodimer. Requires Mg(2+) as cofactor.

The protein localises to the cytoplasm. The enzyme catalyses IMP + L-aspartate + GTP = N(6)-(1,2-dicarboxyethyl)-AMP + GDP + phosphate + 2 H(+). The protein operates within purine metabolism; AMP biosynthesis via de novo pathway; AMP from IMP: step 1/2. Functionally, plays an important role in the de novo pathway of purine nucleotide biosynthesis. Catalyzes the first committed step in the biosynthesis of AMP from IMP. This Salmonella agona (strain SL483) protein is Adenylosuccinate synthetase.